The following is a 206-amino-acid chain: RNA pyrophosphohydrolase (206 aa).

A Nudix hydrolase domain is found at 6 to 150; sequence GYRPNVGIVI…KRDVYRKVMK (145 aa). The Nudix box motif lies at 38–59; that stretch reads GGINEGENIETAMYRELYEEVG. Basic and acidic residues predominate over residues 162 to 191; the sequence is KPETVEKPRVERTEKRDFQKRDNQKREFRK. The interval 162–206 is disordered; sequence KPETVEKPRVERTEKRDFQKRDNQKREFRKSARMWNNSHQKGKAQ.

The protein belongs to the Nudix hydrolase family. RppH subfamily. It depends on a divalent metal cation as a cofactor.

Its function is as follows. Accelerates the degradation of transcripts by removing pyrophosphate from the 5'-end of triphosphorylated RNA, leading to a more labile monophosphorylated state that can stimulate subsequent ribonuclease cleavage. The protein is RNA pyrophosphohydrolase of Actinobacillus pleuropneumoniae serotype 7 (strain AP76).